The following is a 107-amino-acid chain: Ferredoxin (107 aa).

2 consecutive 4Fe-4S ferredoxin-type domains span residues 8 to 37 and 38 to 67; these read ERVV…LDEN and GKSR…KASE. C17, C20, and C23 together coordinate [4Fe-4S] cluster. The [3Fe-4S] cluster site is built by C27, C47, and C53. C57 contributes to the [4Fe-4S] cluster binding site.

As to quaternary structure, monomer. [4Fe-4S] cluster serves as cofactor. Requires [3Fe-4S] cluster as cofactor. Post-translationally, the N-terminus is blocked.

Functionally, ferredoxins are iron-sulfur proteins that transfer electrons in a wide variety of metabolic reactions. This Pyrobaculum islandicum (strain DSM 4184 / JCM 9189 / GEO3) protein is Ferredoxin.